Consider the following 170-residue polypeptide: Large ribosomal subunit protein uL11 (170 aa).

The protein belongs to the universal ribosomal protein uL11 family. In terms of assembly, part of the ribosomal stalk of the 50S ribosomal subunit. Interacts with L10 and the large rRNA to form the base of the stalk. L10 forms an elongated spine to which L12 dimers bind in a sequential fashion forming a multimeric L10(L12)X complex.

In terms of biological role, forms part of the ribosomal stalk which helps the ribosome interact with GTP-bound translation factors. The chain is Large ribosomal subunit protein uL11 from Sulfolobus acidocaldarius (strain ATCC 33909 / DSM 639 / JCM 8929 / NBRC 15157 / NCIMB 11770).